We begin with the raw amino-acid sequence, 321 residues long: uncharacterized protein (321 aa).

A disordered region spans residues 157–220; that stretch reads TLEQPIEEDF…EGAEEDSHEH (64 aa). The segment covering 161–214 has biased composition (acidic residues); that stretch reads PIEEDFDEQDENDQNERDEDDAEEQEEDEVEEEEEEQQEEEEGENDEELTEGAE. Positions 167 to 212 form a coiled coil; it reads DEQDENDQNERDEDDAEEQEEDEVEEEEEEQQEEEEGENDEELTEG.

This is an uncharacterized protein from Dictyostelium discoideum (Social amoeba).